The sequence spans 416 residues: Protein P47 (416 aa).

Belongs to the TULIP P47 family. As to quaternary structure, part of a crude toxin extract that includes BoNTA2/NTNH, P47, OrfX2 and OrfX3; OrfX1 was not detected.

In terms of biological role, part of a botulinum neurotoxin type A2 (BoNT) locus; may be part of a progenitor toxin complex required to protect BoNT during its passage through the host gastrointestinal tract. This Clostridium botulinum (strain Kyoto / Type A2) protein is Protein P47.